A 206-amino-acid polypeptide reads, in one-letter code: Large ribosomal subunit protein uL4 (206 aa).

The segment at 43 to 78 (ARSGNRAQKDREQVKHTTKKPWRQKGTGRARAGMSS) is disordered. Residues 58–70 (HTTKKPWRQKGTG) show a composition bias toward basic residues.

Belongs to the universal ribosomal protein uL4 family. As to quaternary structure, part of the 50S ribosomal subunit.

One of the primary rRNA binding proteins, this protein initially binds near the 5'-end of the 23S rRNA. It is important during the early stages of 50S assembly. It makes multiple contacts with different domains of the 23S rRNA in the assembled 50S subunit and ribosome. Its function is as follows. Forms part of the polypeptide exit tunnel. The protein is Large ribosomal subunit protein uL4 of Polynucleobacter necessarius subsp. necessarius (strain STIR1).